The following is a 349-amino-acid chain: Glucose 1-dehydrogenase 1 (349 aa).

Residue cysteine 39 coordinates Zn(2+). Threonine 41 is a binding site for substrate. Positions 64 and 65 each coordinate Zn(2+). Positions 110 and 146 each coordinate substrate. Position 146 (glutamate 146) interacts with Zn(2+). Residues 178–181, 260–262, and 289–291 contribute to the NADP(+) site; these read AGPI, LGV, and SVN. Residue asparagine 291 participates in substrate binding.

This sequence belongs to the zinc-containing alcohol dehydrogenase family. Glucose 1-dehydrogenase subfamily. Zn(2+) serves as cofactor.

The enzyme catalyses D-glucose + NAD(+) = D-glucono-1,5-lactone + NADH + H(+). It catalyses the reaction D-glucose + NADP(+) = D-glucono-1,5-lactone + NADPH + H(+). In terms of biological role, catalyzes the NAD(P)(+)-dependent oxidation of D-glucose to D-gluconate via gluconolactone. Can utilize both NAD(+) and NADP(+) as electron acceptor. Is involved in the degradation of glucose through a non-phosphorylative variant of the Entner-Doudoroff pathway. In Caldivirga maquilingensis (strain ATCC 700844 / DSM 13496 / JCM 10307 / IC-167), this protein is Glucose 1-dehydrogenase 1.